Here is a 445-residue protein sequence, read N- to C-terminus: Phosphoglucosamine mutase (445 aa).

S102 acts as the Phosphoserine intermediate in catalysis. Positions 102, 241, 243, and 245 each coordinate Mg(2+). S102 carries the post-translational modification Phosphoserine.

The protein belongs to the phosphohexose mutase family. The cofactor is Mg(2+). In terms of processing, activated by phosphorylation.

It catalyses the reaction alpha-D-glucosamine 1-phosphate = D-glucosamine 6-phosphate. Catalyzes the conversion of glucosamine-6-phosphate to glucosamine-1-phosphate. The sequence is that of Phosphoglucosamine mutase from Shewanella sp. (strain ANA-3).